The primary structure comprises 634 residues: Factor of DNA methylation 5 (634 aa).

The stretch at 254 to 469 (IVVDDLANKI…EDTNSALMVK (216 aa)) forms a coiled coil.

Its function is as follows. Acts in association with FDM3 and FDM4 for RNA-directed DNA methylation (RdDM). This Arabidopsis thaliana (Mouse-ear cress) protein is Factor of DNA methylation 5.